We begin with the raw amino-acid sequence, 370 residues long: 3-isopropylmalate dehydrogenase (370 aa).

Positions 99, 109, 137, and 227 each coordinate substrate. Mg(2+) is bound by residues aspartate 227, aspartate 251, and aspartate 255. 290–302 (GSAPDIAGQDKAN) is an NAD(+) binding site.

The protein belongs to the isocitrate and isopropylmalate dehydrogenases family. LeuB type 1 subfamily. As to quaternary structure, homodimer. It depends on Mg(2+) as a cofactor. The cofactor is Mn(2+).

It localises to the cytoplasm. The enzyme catalyses (2R,3S)-3-isopropylmalate + NAD(+) = 4-methyl-2-oxopentanoate + CO2 + NADH. It participates in amino-acid biosynthesis; L-leucine biosynthesis; L-leucine from 3-methyl-2-oxobutanoate: step 3/4. Catalyzes the oxidation of 3-carboxy-2-hydroxy-4-methylpentanoate (3-isopropylmalate) to 3-carboxy-4-methyl-2-oxopentanoate. The product decarboxylates to 4-methyl-2 oxopentanoate. This Rhodospirillum rubrum (strain ATCC 11170 / ATH 1.1.1 / DSM 467 / LMG 4362 / NCIMB 8255 / S1) protein is 3-isopropylmalate dehydrogenase.